Consider the following 190-residue polypeptide: Large ribosomal subunit protein uL5 (190 aa).

The protein belongs to the universal ribosomal protein uL5 family. Part of the 50S ribosomal subunit; part of the 5S rRNA/L5/L18/L25 subcomplex. Contacts the 5S rRNA and the P site tRNA. Forms a bridge to the 30S subunit in the 70S ribosome.

Its function is as follows. This is one of the proteins that bind and probably mediate the attachment of the 5S RNA into the large ribosomal subunit, where it forms part of the central protuberance. In the 70S ribosome it contacts protein S13 of the 30S subunit (bridge B1b), connecting the 2 subunits; this bridge is implicated in subunit movement. Contacts the P site tRNA; the 5S rRNA and some of its associated proteins might help stabilize positioning of ribosome-bound tRNAs. This Bifidobacterium longum (strain DJO10A) protein is Large ribosomal subunit protein uL5.